We begin with the raw amino-acid sequence, 65 residues long: Toxin NaTx-22 (65 aa).

The region spanning 1 to 64 (KDGYPVIKTT…TYPIPGKTCK (64 aa)) is the LCN-type CS-alpha/beta domain. Cystine bridges form between Cys12-Cys63, Cys16-Cys39, Cys25-Cys44, and Cys29-Cys46.

It belongs to the long (4 C-C) scorpion toxin superfamily. Sodium channel inhibitor family. As to expression, expressed by the venom gland.

The protein resides in the secreted. Its function is as follows. Probable sodium channel inhibitor. This Centruroides sculpturatus (Arizona bark scorpion) protein is Toxin NaTx-22.